A 340-amino-acid chain; its full sequence is NAD kinase (340 aa).

Aspartate 66 acts as the Proton acceptor in catalysis. NAD(+) contacts are provided by residues 66–67 (DG), arginine 71, 141–142 (ND), lysine 152, aspartate 171, 182–187 (TAYAFS), and alanine 206. The segment at 321 to 340 (AGVAGTEPDKPGERDGKAGS) is disordered. Positions 327–340 (EPDKPGERDGKAGS) are enriched in basic and acidic residues.

This sequence belongs to the NAD kinase family. A divalent metal cation is required as a cofactor.

The protein localises to the cytoplasm. The enzyme catalyses NAD(+) + ATP = ADP + NADP(+) + H(+). Its function is as follows. Involved in the regulation of the intracellular balance of NAD and NADP, and is a key enzyme in the biosynthesis of NADP. Catalyzes specifically the phosphorylation on 2'-hydroxyl of the adenosine moiety of NAD to yield NADP. The polypeptide is NAD kinase (Bifidobacterium longum (strain DJO10A)).